We begin with the raw amino-acid sequence, 516 residues long: Citrate synthase, glyoxysomal (516 aa).

A glyoxysome-targeting transit peptide spans 1 to 43 (MPTDMELSPSNVARHRLAVLAAHLSAASLEPPVMASSLEAHCV). Catalysis depends on residues His-329, His-368, and Asp-424.

Belongs to the citrate synthase family.

The protein localises to the glyoxysome. It catalyses the reaction oxaloacetate + acetyl-CoA + H2O = citrate + CoA + H(+). It participates in carbohydrate metabolism; glyoxylate cycle; isocitrate from oxaloacetate: step 1/2. This is Citrate synthase, glyoxysomal from Cucurbita maxima (Pumpkin).